The primary structure comprises 300 residues: Ferredoxin/F(420)H(2)-dependent CoB-CoM heterodisulfide reductase subunit B (300 aa).

Belongs to the HdrB family. As to quaternary structure, the ferredoxin/F(420)H(2)-dependent CoB-CoM heterodisulfide reductase is composed of three subunits; HdrA2, HdrB2 and HdrC2. [4Fe-4S] cluster is required as a cofactor.

The protein localises to the cytoplasm. It catalyses the reaction coenzyme B + coenzyme M + 2 oxidized [2Fe-2S]-[ferredoxin] = coenzyme M-coenzyme B heterodisulfide + 2 reduced [2Fe-2S]-[ferredoxin] + 2 H(+). The enzyme catalyses coenzyme B + 2 oxidized coenzyme F420-(gamma-L-Glu)(n) + coenzyme M + 2 reduced [2Fe-2S]-[ferredoxin] + 4 H(+) = coenzyme M-coenzyme B heterodisulfide + 2 reduced coenzyme F420-(gamma-L-Glu)(n) + 2 oxidized [2Fe-2S]-[ferredoxin]. It functions in the pathway cofactor metabolism; coenzyme M-coenzyme B heterodisulfide reduction; coenzyme B and coenzyme M from coenzyme M-coenzyme B heterodisulfide: step 1/1. Functionally, part of a complex that catalyzes the reversible reduction of CoM-S-S-CoB to the thiol-coenzymes H-S-CoM (coenzyme M) and H-S-CoB (coenzyme B). Catalyzes the transfer of electrons from ferredoxin to CoM-S-S-CoB during methanogenesis from acetate. Electrons transfer from ferredoxin to CoM-S-S-CoB via HdrA2, HdrC2 and HdrB2. In addition, the complex can use electron bifurcation to direct electron pairs from reduced coenzyme F420 towards the reduction of both ferredoxin and CoB-CoM heterodisulfide. This activity may take place during Fe(III)-dependent anaerobic methane oxidation. The protein is Ferredoxin/F(420)H(2)-dependent CoB-CoM heterodisulfide reductase subunit B of Methanosarcina acetivorans (strain ATCC 35395 / DSM 2834 / JCM 12185 / C2A).